The primary structure comprises 74 residues: Anaphase-promoting complex subunit 13 (74 aa).

This sequence belongs to the APC13 family. The APC/C is composed of at least 12 subunits.

The protein resides in the nucleus. Its pathway is protein modification; protein ubiquitination. Its function is as follows. Component of the anaphase promoting complex/cyclosome (APC/C), a cell cycle-regulated E3 ubiquitin ligase that controls progression through mitosis and the G1 phase of the cell cycle. The APC/C complex acts by mediating ubiquitination and subsequent degradation of target proteins: it mainly mediates the formation of 'Lys-11'-linked polyubiquitin chains and, to a lower extent, the formation of 'Lys-48'- and 'Lys-63'-linked polyubiquitin chains. The APC/C complex catalyzes assembly of branched 'Lys-11'-/'Lys-48'-linked branched ubiquitin chains on target proteins. This is Anaphase-promoting complex subunit 13 (anapc13) from Xenopus tropicalis (Western clawed frog).